A 462-amino-acid polypeptide reads, in one-letter code: NEDD8-activating enzyme E1 regulatory subunit (462 aa).

Belongs to the ubiquitin-activating E1 family. ULA1 subfamily. In terms of assembly, heterodimer of UBA3 and ULA1. The complex binds NEDD8 and UBC12.

The protein operates within protein modification; protein neddylation. Regulatory subunit of the dimeric UBA3-ULA1 E1 enzyme. E1 activates NEDD8/RUB1 by first adenylating its C-terminal glycine residue with ATP, thereafter linking this residue to the side chain of the catalytic cysteine, yielding a NEDD8-UBA3 thioester and free AMP. E1 finally transfers NEDD8 to the catalytic cysteine of UBC12. The chain is NEDD8-activating enzyme E1 regulatory subunit (ULA1) from Saccharomyces cerevisiae (strain ATCC 204508 / S288c) (Baker's yeast).